A 270-amino-acid polypeptide reads, in one-letter code: 4-hydroxy-tetrahydrodipicolinate reductase (270 aa).

Residues Gly11–Met16 and Glu37 contribute to the NAD(+) site. NADP(+) is bound at residue Arg38. NAD(+) is bound by residues Gly101 to Thr103 and Ala125 to Met128. His158 serves as the catalytic Proton donor/acceptor. His159 serves as a coordination point for (S)-2,3,4,5-tetrahydrodipicolinate. The active-site Proton donor is Lys162. Gly168–Thr169 contacts (S)-2,3,4,5-tetrahydrodipicolinate.

The protein belongs to the DapB family.

The protein resides in the cytoplasm. It catalyses the reaction (S)-2,3,4,5-tetrahydrodipicolinate + NAD(+) + H2O = (2S,4S)-4-hydroxy-2,3,4,5-tetrahydrodipicolinate + NADH + H(+). It carries out the reaction (S)-2,3,4,5-tetrahydrodipicolinate + NADP(+) + H2O = (2S,4S)-4-hydroxy-2,3,4,5-tetrahydrodipicolinate + NADPH + H(+). It participates in amino-acid biosynthesis; L-lysine biosynthesis via DAP pathway; (S)-tetrahydrodipicolinate from L-aspartate: step 4/4. Functionally, catalyzes the conversion of 4-hydroxy-tetrahydrodipicolinate (HTPA) to tetrahydrodipicolinate. This Shewanella baltica (strain OS223) protein is 4-hydroxy-tetrahydrodipicolinate reductase.